A 296-amino-acid chain; its full sequence is Fructose-bisphosphate aldolase class 1 (296 aa).

Catalysis depends on glutamate 175, which acts as the Proton acceptor. Lysine 212 functions as the Schiff-base intermediate with dihydroxyacetone-P in the catalytic mechanism.

It belongs to the class I fructose-bisphosphate aldolase family.

The enzyme catalyses beta-D-fructose 1,6-bisphosphate = D-glyceraldehyde 3-phosphate + dihydroxyacetone phosphate. Its pathway is carbohydrate degradation; glycolysis; D-glyceraldehyde 3-phosphate and glycerone phosphate from D-glucose: step 4/4. The polypeptide is Fructose-bisphosphate aldolase class 1 (fda) (Staphylococcus epidermidis (strain ATCC 12228 / FDA PCI 1200)).